A 420-amino-acid chain; its full sequence is Tyrosine--tRNA ligase (420 aa).

Position 39 (tyrosine 39) interacts with L-tyrosine. A 'HIGH' region motif is present at residues 44–53 (CTAPSLHIGS). L-tyrosine contacts are provided by tyrosine 176 and glutamine 180. The 'KMSKS' region signature appears at 236-240 (KMGKT). Lysine 239 is an ATP binding site. In terms of domain architecture, S4 RNA-binding spans 349 to 414 (IPLIDLLYDT…AGKKRHIKIL (66 aa)).

This sequence belongs to the class-I aminoacyl-tRNA synthetase family. TyrS type 1 subfamily. In terms of assembly, homodimer.

Its subcellular location is the cytoplasm. It carries out the reaction tRNA(Tyr) + L-tyrosine + ATP = L-tyrosyl-tRNA(Tyr) + AMP + diphosphate + H(+). Functionally, catalyzes the attachment of tyrosine to tRNA(Tyr) in a two-step reaction: tyrosine is first activated by ATP to form Tyr-AMP and then transferred to the acceptor end of tRNA(Tyr). This chain is Tyrosine--tRNA ligase, found in Wolbachia pipientis subsp. Culex pipiens (strain wPip).